The sequence spans 419 residues: O-methyltransferase desB (419 aa).

Residues 255-256 (GG), aspartate 280, 306-307 (DF), and arginine 323 contribute to the S-adenosyl-L-methionine site. Histidine 326 functions as the Proton acceptor in the catalytic mechanism.

This sequence belongs to the class I-like SAM-binding methyltransferase superfamily. Cation-independent O-methyltransferase family. S-adenosyl-L-methionine is required as a cofactor.

The protein operates within secondary metabolite biosynthesis. In terms of biological role, non-reducing polyketide synthase; part of the gene cluster that mediates the biosynthesis of the bicoumarin desertorin. The non-reducing polyketide synthase desS first catalyzes the formation of the pentaketidic 4,7-dihydroxy-5-methylcoumarin from acetyl coenzyme A and 4 malonyl coenzyme A molecules. Further O-methylation by desB leads to the formation of 7-demethylsiderin. Then, an oxidative phenol coupling catalyzed by the cytochrome P450 monooxygenase desC forms the 6,8'-dimer M-desertorin A via dimerization the monomeric precursor, 7-demethylsiderin. M-desertorin A is further converted to M-desertorin C. In Aspergillus desertorum (Emericella desertorum), this protein is O-methyltransferase desB.